Consider the following 114-residue polypeptide: Snake venom vascular endothelial growth factor (114 aa).

At Gln1 the chain carries Pyrrolidone carboxylic acid. Disulfide bonds link Cys14/Cys56, Cys45/Cys91, and Cys49/Cys93. Residues 92 to 114 (ECRPGSTVNNGKRKKNPKEGEPR) are disordered.

The protein belongs to the PDGF/VEGF growth factor family. Snake venom VEGF subfamily. As to quaternary structure, homodimer; disulfide-linked. Interacts with human VEGF receptor 1/FLT1. Interacts with human VEGF receptor 2/KDR. Expressed by venom gland.

It is found in the secreted. Its function is as follows. Snake venom vascular endothelial growth factor (svVEGF) that may contribute to venom dispersion and prey subjugation by inducing vascular permeability and hypotension. Induces an increase in capillary permeability after intradermal injection, as well as a drastic hypotensive effect after intravenous injection. The hypotension is mediated by nitric oxide (NO), which is produced by VEGF-activated endothelium NO synthase. Induces angiogenesis and migration of human vascular endothelial cells in vitro. Exhibits angiogenic activity by inducing human umbilical vein endothelial cells (HUVEC) to develop vessels in vitro. Induces cellular migration of HUVEC cells towards a wound in scratch assays, enhancing wound closure after 12 h by 49.5%. Induces dose-dependent leukocyte recruitment to the peritoneal cavity leading to increased vascular permeability in mice. In Crotalus durissus terrificus (South American rattlesnake), this protein is Snake venom vascular endothelial growth factor.